The chain runs to 90 residues: Small ribosomal subunit protein uS15c (90 aa).

This sequence belongs to the universal ribosomal protein uS15 family. As to quaternary structure, part of the 30S ribosomal subunit.

The protein resides in the plastid. It is found in the chloroplast. In Platanus occidentalis (Sycamore), this protein is Small ribosomal subunit protein uS15c (rps15).